The primary structure comprises 35 residues: Dermonecrotic toxin LrSicTox-alphaI-1 (35 aa).

His-11 is a catalytic residue. Asp-33 provides a ligand contact to Mg(2+).

It belongs to the arthropod phospholipase D family. Class II subfamily. Requires Mg(2+) as cofactor. Post-translationally, contains 2 disulfide bonds. In terms of tissue distribution, expressed by the venom gland.

The protein resides in the secreted. The enzyme catalyses an N-(acyl)-sphingosylphosphocholine = an N-(acyl)-sphingosyl-1,3-cyclic phosphate + choline. The catalysed reaction is an N-(acyl)-sphingosylphosphoethanolamine = an N-(acyl)-sphingosyl-1,3-cyclic phosphate + ethanolamine. It carries out the reaction a 1-acyl-sn-glycero-3-phosphocholine = a 1-acyl-sn-glycero-2,3-cyclic phosphate + choline. It catalyses the reaction a 1-acyl-sn-glycero-3-phosphoethanolamine = a 1-acyl-sn-glycero-2,3-cyclic phosphate + ethanolamine. Its function is as follows. Dermonecrotic toxins cleave the phosphodiester linkage between the phosphate and headgroup of certain phospholipids (sphingolipid and lysolipid substrates), forming an alcohol (often choline) and a cyclic phosphate. This toxin acts on sphingomyelin (SM). It may also act on ceramide phosphoethanolamine (CPE), lysophosphatidylcholine (LPC) and lysophosphatidylethanolamine (LPE), but not on lysophosphatidylserine (LPS), and lysophosphatidylglycerol (LPG). It acts by transphosphatidylation, releasing exclusively cyclic phosphate products as second products. Induces dermonecrosis, hemolysis, increased vascular permeability, edema, inflammatory response, and platelet aggregation. The protein is Dermonecrotic toxin LrSicTox-alphaI-1 of Loxosceles reclusa (Brown recluse spider).